The primary structure comprises 452 residues: 1,3-beta-glucanosyltransferase gel1 (452 aa).

A signal peptide spans 1 to 19 (MKASAVTAALAVGASTVLA). A disulfide bridge connects residues C71 and C100. Y89, N159, E160, D201, and R206 together coordinate (1,3-beta-D-glucosyl)n. E160 (proton donor) is an active-site residue. 2 disulfide bridges follow: C215–C345 and C233–C264. N249 carries an N-linked (GlcNAc...) asparagine glycan. E261 functions as the Nucleophile in the catalytic mechanism. Y292 is a (1,3-beta-D-glucosyl)n binding site. Positions 325 to 340 (EKTSNPSGDGNYNKTG) are enriched in polar residues. Positions 325–419 (EKTSNPSGDG…SGTSTSSKGA (95 aa)) are disordered. An N-linked (GlcNAc...) asparagine glycan is attached at N337. Positions 393 to 419 (STATAEPGSGSATGSSSSGTSTSSKGA) are enriched in low complexity. Residue A419 is the site of GPI-like-anchor amidated alanine attachment. Residues 420 to 452 (AAGLTVPSLTMAPVVVGAVTLLSTVFGAGLVLL) constitute a propeptide, removed in mature form.

Belongs to the glycosyl hydrolase 72 family. In terms of processing, the GPI-like anchor contains a phosphoceramide lipid group. The anchor position has not been determined.

The protein resides in the cell membrane. Functionally, splits internally a 1,3-beta-glucan molecule and transfers the newly generated reducing end (the donor) to the non-reducing end of another 1,3-beta-glucan molecule (the acceptor) forming a 1,3-beta linkage, resulting in the elongation of 1,3-beta-glucan chains in the cell wall. Involved in cell wall morphogenesis. This is 1,3-beta-glucanosyltransferase gel1 (gel1) from Aspergillus fumigatus (strain CBS 144.89 / FGSC A1163 / CEA10) (Neosartorya fumigata).